A 335-amino-acid polypeptide reads, in one-letter code: Phosphate acyltransferase (335 aa).

The protein belongs to the PlsX family. As to quaternary structure, homodimer. Probably interacts with PlsY.

It localises to the cytoplasm. The enzyme catalyses a fatty acyl-[ACP] + phosphate = an acyl phosphate + holo-[ACP]. The protein operates within lipid metabolism; phospholipid metabolism. Its function is as follows. Catalyzes the reversible formation of acyl-phosphate (acyl-PO(4)) from acyl-[acyl-carrier-protein] (acyl-ACP). This enzyme utilizes acyl-ACP as fatty acyl donor, but not acyl-CoA. The chain is Phosphate acyltransferase from Streptococcus pyogenes serotype M28 (strain MGAS6180).